Consider the following 520-residue polypeptide: Anthranilate synthase component 1 (520 aa).

L-tryptophan-binding positions include S40, K50, and 291-293 (PYM). 328–329 (GT) is a chorismate binding site. E361 lines the Mg(2+) pocket. Chorismate-binding positions include Y449, R469, 483–485 (GAG), and G485. Mg(2+) is bound at residue E498.

This sequence belongs to the anthranilate synthase component I family. As to quaternary structure, homodimer. In fact, exists in a monomer-dimer equilibrium in solution, shifted spontaneously in favor of the dimer; the monomer has a reduced activity compared with the dimer. Heterotetramer consisting of two non-identical subunits: a beta subunit (TrpG) and a large alpha subunit (TrpE) (Potential). It depends on Mg(2+) as a cofactor.

It carries out the reaction chorismate + L-glutamine = anthranilate + pyruvate + L-glutamate + H(+). Its pathway is amino-acid biosynthesis; L-tryptophan biosynthesis; L-tryptophan from chorismate: step 1/5. With respect to regulation, cooperatively feedback inhibited by tryptophan. Its function is as follows. Part of a heterotetrameric complex that catalyzes the two-step biosynthesis of anthranilate, an intermediate in the biosynthesis of L-tryptophan. In the first step, the glutamine-binding beta subunit (TrpG) of anthranilate synthase (AS) provides the glutamine amidotransferase activity which generates ammonia as a substrate that, along with chorismate, is used in the second step, catalyzed by the large alpha subunit of AS (TrpE) to produce anthranilate. In the absence of TrpG, TrpE can synthesize anthranilate directly from chorismate and high concentrations of ammonia. This chain is Anthranilate synthase component 1 (trpE), found in Salmonella typhimurium (strain LT2 / SGSC1412 / ATCC 700720).